We begin with the raw amino-acid sequence, 607 residues long: UvrABC system protein C (607 aa).

One can recognise a GIY-YIG domain in the interval 14-93; that stretch reads HKPGVYLMLD…IKKHKPRYNI (80 aa). One can recognise a UVR domain in the interval 203-238; it reads RDLLAELKRQMLQASERLNFEQAGQFRDQIRALKTT.

This sequence belongs to the UvrC family. As to quaternary structure, interacts with UvrB in an incision complex.

The protein resides in the cytoplasm. The UvrABC repair system catalyzes the recognition and processing of DNA lesions. UvrC both incises the 5' and 3' sides of the lesion. The N-terminal half is responsible for the 3' incision and the C-terminal half is responsible for the 5' incision. The polypeptide is UvrABC system protein C (Desulfotalea psychrophila (strain LSv54 / DSM 12343)).